Consider the following 283-residue polypeptide: Tetraspanin-33 (283 aa).

Over 1-24 (MARRPGVPAAYGDEFSFVSPLVKY) the chain is Cytoplasmic. Residues 25 to 45 (LLFFFNMLFWVISMVMVAVGV) form a helical membrane-spanning segment. Topologically, residues 46 to 64 (YARLMKHAEAALACLAVDP) are extracellular. The helical transmembrane segment at 65-85 (AILLIVVGVLMFLLTFCGCIG) threads the bilayer. Over 86 to 96 (SLRENICLLQT) the chain is Cytoplasmic. A helical membrane pass occupies residues 97-117 (FSLCLTIVFLLQLAAGILGFV). Over 118–235 (FSDKARGKVS…DKLVNWIHSN (118 aa)) the chain is Extracellular. Disulfide bonds link Cys-156–Cys-224, Cys-157–Cys-189, Cys-173–Cys-183, and Cys-190–Cys-203. The N-linked (GlcNAc...) asparagine glycan is linked to Asn-172. Residues 236–256 (LFLLGGVALGLAIPQLVGILL) form a helical membrane-spanning segment. At 257–283 (SQVLVNQIKDQIKLQLYNQQHRADPWY) the chain is on the cytoplasmic side.

This sequence belongs to the tetraspanin (TM4SF) family. As to quaternary structure, homodimer; disulfide-linked. Interacts (via extracellular domain) with ADAM10 (via extracellular domain). Interacts (via cytoplasmic domain) with PLEKHA7 (via WW domains); the interaction is dependent on PDZD11 being bound to PLEKHA7 and facilitates the docking of ADAM10 to zonula adherens. As to expression, predominantly expressed in erythroblasts.

The protein resides in the cell membrane. It is found in the cell junction. The protein localises to the adherens junction. Its subcellular location is the cytoplasm. In terms of biological role, part of TspanC8 subgroup, composed of 6 members that interact with the transmembrane metalloprotease ADAM10. This interaction is required for ADAM10 exit from the endoplasmic reticulum and for enzymatic maturation and trafficking to the cell surface as well as substrate specificity. Different TspanC8/ADAM10 complexes have distinct substrates. Plays an important role in normal erythropoiesis. It has a role in the differentiation of erythroid progenitors. Negatively regulates ligand-induced Notch activity probably by regulating ADAM10 activity. Mediates docking of ADAM10 to zonula adherens by interacting with ADAM10 and, in a PDZD11-dependent manner, with the zonula adherens protein PLEKHA7. The chain is Tetraspanin-33 (Tspan33) from Mus musculus (Mouse).